The primary structure comprises 149 residues: Protein FAM72A (149 aa).

Belongs to the FAM72 family. Interacts with UNG. In terms of tissue distribution, expressed at high levels in stomach and also in kidney and, at low levels, in heart (at protein level). In the stomach, highly expressed in foveolar cells, parietal cells and chief cells (at protein level). In kidney, expressed in endothelial cells, mesangial and epithelial cells (parietal and visceral epithelium) around glomerulus (at protein level).

The protein resides in the cytoplasm. The protein localises to the mitochondrion. Functionally, may play a role in the regulation of cellular reactive oxygen species metabolism. May participate in cell growth regulation. The polypeptide is Protein FAM72A (Fam72a) (Rattus norvegicus (Rat)).